Here is a 591-residue protein sequence, read N- to C-terminus: Protein NRT1/ PTR FAMILY 1.1 (591 aa).

11 helical membrane-spanning segments follow: residues 68–88 (TVLF…AFLS), 98–118 (IVIA…TAML), 139–159 (SSQL…SGGI), 186–206 (FFGW…TVIV), 216–236 (IGFG…VFAS), 329–349 (LKAL…SINV), 374–394 (IPAG…VVLY), 418–438 (MGLG…VEHY), 460–480 (AMWL…TGIG), 496–516 (IAAS…SVIL), and 543–563 (YYWV…VCSW).

Belongs to the major facilitator superfamily. Proton-dependent oligopeptide transporter (POT/PTR) (TC 2.A.17) family. Expressed in siliques, shoots and roots. Mainly detected in larger expanded leaves, in the companion cells of major veins.

Its subcellular location is the cell membrane. In terms of biological role, low-affinity nitrate transporter involved in xylem-to-phloem transfer for redistributing nitrate into developing leaves. Not involved in dipeptides transport. This Arabidopsis thaliana (Mouse-ear cress) protein is Protein NRT1/ PTR FAMILY 1.1 (NPF1.1).